A 565-amino-acid chain; its full sequence is Glucose starvation modulator protein 1 (565 aa).

The zn(2)-C6 fungal-type DNA-binding region spans 20–48 (CVFCHQKHLQCSNERPCKNCVKRNIAHGC). 2 disordered regions span residues 63 to 106 (GVSG…ESSN) and 250 to 269 (QVSPSPSNTSTSENNTNTLS). A compositionally biased stretch (polar residues) spans 82–93 (SPLSTSMSPTDS). Residues 252–269 (SPSPSNTSTSENNTNTLS) are compositionally biased toward low complexity.

The protein belongs to the ERT1/acuK family.

The protein localises to the nucleus. Its function is as follows. Transcription factor which regulates nonfermentable carbon utilization. This chain is Glucose starvation modulator protein 1 (GSM1), found in Candida dubliniensis (strain CD36 / ATCC MYA-646 / CBS 7987 / NCPF 3949 / NRRL Y-17841) (Yeast).